A 516-amino-acid chain; its full sequence is Lysine--tRNA ligase (516 aa).

The interval 1-23 (MTEPNRAQAAPASPTAELPAADE) is disordered. Mg(2+)-binding residues include Glu426 and Glu433.

This sequence belongs to the class-II aminoacyl-tRNA synthetase family. As to quaternary structure, homodimer. It depends on Mg(2+) as a cofactor.

The protein localises to the cytoplasm. It catalyses the reaction tRNA(Lys) + L-lysine + ATP = L-lysyl-tRNA(Lys) + AMP + diphosphate. The chain is Lysine--tRNA ligase from Cupriavidus pinatubonensis (strain JMP 134 / LMG 1197) (Cupriavidus necator (strain JMP 134)).